The primary structure comprises 150 residues: D-aminoacyl-tRNA deacylase (150 aa).

The Gly-cisPro motif, important for rejection of L-amino acids motif lies at 138 to 139; that stretch reads GP.

The protein belongs to the DTD family. Homodimer.

It is found in the cytoplasm. It carries out the reaction glycyl-tRNA(Ala) + H2O = tRNA(Ala) + glycine + H(+). The enzyme catalyses a D-aminoacyl-tRNA + H2O = a tRNA + a D-alpha-amino acid + H(+). Functionally, an aminoacyl-tRNA editing enzyme that deacylates mischarged D-aminoacyl-tRNAs. Also deacylates mischarged glycyl-tRNA(Ala), protecting cells against glycine mischarging by AlaRS. Acts via tRNA-based rather than protein-based catalysis; rejects L-amino acids rather than detecting D-amino acids in the active site. By recycling D-aminoacyl-tRNA to D-amino acids and free tRNA molecules, this enzyme counteracts the toxicity associated with the formation of D-aminoacyl-tRNA entities in vivo and helps enforce protein L-homochirality. The protein is D-aminoacyl-tRNA deacylase of Sorangium cellulosum (strain So ce56) (Polyangium cellulosum (strain So ce56)).